We begin with the raw amino-acid sequence, 85 residues long: Small ribosomal subunit protein eS21 (85 aa).

It belongs to the eukaryotic ribosomal protein eS21 family. In terms of assembly, component of the 40S small ribosomal subunit.

The protein localises to the cytoplasm. It is found in the cytosol. Its subcellular location is the rough endoplasmic reticulum. This chain is Small ribosomal subunit protein eS21 (rps-21), found in Pectinaria gouldii (Trumpet worm).